Consider the following 184-residue polypeptide: FMRFamide-related peptides (184 aa).

A propeptide spanning residues 1–44 is cleaved from the precursor; the sequence is MLVSSSVLKDDSSLRIFKESPNEFEYIIKRHDMDDRKEDTESKE. Phe56 is subject to Phenylalanine amide. Residues 59-83 constitute a propeptide that is removed on maturation; the sequence is GQSFFNNLDNSAFDNEIDSKVSRHP. Phenylalanine amide is present on Phe94. The propeptide occupies 97–107; sequence SGMKSTNDEQP. Phe119 carries the post-translational modification Phenylalanine amide. Positions 122–184 are excised as a propeptide; it reads NIQIVPTDFD…SLETNSNHRE (63 aa).

The protein belongs to the FARP (FMRFamide related peptide) family. As to expression, expressed throughout the central nervous system.

Its subcellular location is the secreted. In terms of biological role, in insects, FMRFamide and related peptides have modulatory actions at skeletal neuromuscular junctions, and peptides that are immunologically related to FMRFamide are released into the circulation from neurohemal organs. This is FMRFamide-related peptides from Camponotus floridanus (Florida carpenter ant).